The sequence spans 41 residues: U-AITX-Bg1a (41 aa).

Intrachain disulfides connect C2/C35, C4/C28, and C18/C36.

The protein belongs to the sea anemone type 3 (BDS) potassium channel toxin family.

Its subcellular location is the secreted. The protein localises to the nematocyst. Functionally, potently and selectively inhibits voltage-gated potassium channels Kv11/KCNH/ERG. Acts as a gating-modifier toxin that shifts the voltage-dependence of ERG activation in the positive direction and suppresses its current amplitudes elicited by strong depolarizing pulses that maximally activate the channels. This is U-AITX-Bg1a from Bunodosoma granuliferum (Red warty sea anemone).